Here is a 240-residue protein sequence, read N- to C-terminus: MGGCVGSHHDSSGSLNENSDGTGVALGRNQPLKREKPKWKSDYPMTDGQLRSKRDEFWDTAPAFEGRKEIWDALKAAAQAFESNDHELAQAIIDGASITLPHGALTECYDELGNRYQLPVYCLSPPVNMIEEKSESETIEVPEAPASEGQECQLRLRLSTGRDLRLAVRTSDSVQQMKRRLQTQEGVAATSQRWFFSGRPLTDKMKLEELKISRDYVVQVIVSQPPTTPPLPQNPTPVEN.

The interval 1 to 48 is disordered; sequence MGGCVGSHHDSSGSLNENSDGTGVALGRNQPLKREKPKWKSDYPMTDG. Polar residues predominate over residues 12–21; the sequence is SGSLNENSDG. Positions 32–41 are enriched in basic and acidic residues; that stretch reads LKREKPKWKS. Residues 152 to 227 form the Ubiquitin-like domain; sequence CQLRLRLSTG…VQVIVSQPPT (76 aa).

Its subcellular location is the cytoplasm. The sequence is that of Ubiquitin domain-containing protein 2 (ubtd2) from Danio rerio (Zebrafish).